The sequence spans 807 residues: Glycerol-3-phosphate acyltransferase (807 aa).

The HXXXXD motif signature appears at 308–313 (CHRSHM).

This sequence belongs to the GPAT/DAPAT family.

Its subcellular location is the cell inner membrane. The enzyme catalyses sn-glycerol 3-phosphate + an acyl-CoA = a 1-acyl-sn-glycero-3-phosphate + CoA. It functions in the pathway phospholipid metabolism; CDP-diacylglycerol biosynthesis; CDP-diacylglycerol from sn-glycerol 3-phosphate: step 1/3. This Shewanella denitrificans (strain OS217 / ATCC BAA-1090 / DSM 15013) protein is Glycerol-3-phosphate acyltransferase.